The following is a 120-amino-acid chain: Ribosome-binding factor A (120 aa).

The protein belongs to the RbfA family. As to quaternary structure, monomer. Binds 30S ribosomal subunits, but not 50S ribosomal subunits or 70S ribosomes.

The protein resides in the cytoplasm. One of several proteins that assist in the late maturation steps of the functional core of the 30S ribosomal subunit. Associates with free 30S ribosomal subunits (but not with 30S subunits that are part of 70S ribosomes or polysomes). Required for efficient processing of 16S rRNA. May interact with the 5'-terminal helix region of 16S rRNA. This chain is Ribosome-binding factor A, found in Rickettsia rickettsii (strain Iowa).